Here is a 179-residue protein sequence, read N- to C-terminus: Ribosome maturation factor RimM (179 aa).

Residues E101 to E179 form the PRC barrel domain.

It belongs to the RimM family. In terms of assembly, binds ribosomal protein uS19.

The protein localises to the cytoplasm. An accessory protein needed during the final step in the assembly of 30S ribosomal subunit, possibly for assembly of the head region. Essential for efficient processing of 16S rRNA. May be needed both before and after RbfA during the maturation of 16S rRNA. It has affinity for free ribosomal 30S subunits but not for 70S ribosomes. The protein is Ribosome maturation factor RimM of Treponema denticola (strain ATCC 35405 / DSM 14222 / CIP 103919 / JCM 8153 / KCTC 15104).